The primary structure comprises 118 residues: Large ribosomal subunit protein bL19 (118 aa).

The protein belongs to the bacterial ribosomal protein bL19 family.

Functionally, this protein is located at the 30S-50S ribosomal subunit interface and may play a role in the structure and function of the aminoacyl-tRNA binding site. In Parafrankia sp. (strain EAN1pec), this protein is Large ribosomal subunit protein bL19.